The following is a 1158-amino-acid chain: MGLKIIYGRAGTGKSTFCINQIKKKINNSPTNKLILLVPEQFTFQTENKVLNAIGERYVLNAEVLSFKRLAHNVFNECGGATRTIMGDAGKSMLIFKVLEDLGDNMTVFKNASRQKGFIDIASKTITEFKKYNVNNEVLDLTINEIEDENLKMKMEELKDVFNEFNSRLHEGYVDEEDQLLLLNEKLDGCSLYDGAEIWIDEFSSFTPNQLSVIGKLLKKAKSVNITLSIDEVNSPKVESDLFVATKNTEKRLMNLIQEEGIAFNGYINLNEDIPYRFKENKELAHIERQLYAYPFKQYRGENNSLRLYRANNNYDEIEFVAKDILRLVREKQYRFKDISVICREVDNYEKVISAIFAEYEIPYYIDKKIDIASNPLIVFINSAVDIISKNWTYESMFKYLKTGLIKEFRGIEGAELIDELENYVLAYGIKGKKWMEEWVNYSSSILKEEEISEENKQRLERLNDIRETIVTPLDEFNKECKGKKTLKEFAIILYEFLDSKLNIMDTIDKYVEYFKENDMAIEAKEYSEVRDIFIDVLEQAVDVLGNEVMDLDEFMKVLNIGLSQYEMGLIPVALDQVNIGDITRIKSRGTKALYIIGVNDGVLPSASKEEGILSDNDREILLEKGISLASDTRTKIFEEQFLVYTAFTIAEEYLVVTYPLADFEGKSQRPSIIVHRLKKILPNVKEESEGFKLVNDKYDKISAKIPTLNELMIAIRKNYDGAEIDDYWKYVYDWYLREPKWKERIEYVRKGLEYTNLENNISKEKAKKLYEDNKNKISLSVSRLERYAQCPFAYYIQYGLKAKDRKIYEFTAPDLGSFMHEILDEFTNEIKEKDLKWSDLSKENCKNIINSLVDNQVKNNKSSILNSSKRYSYFTDRFKRILTKSVMVISEQMKRSDFEIYKNELAFGFSKDVNSIKLDLPSGESFYLNGRIDRIDKLNLDGETYLRIIDYKTGSKKFDLNKFYNGLQMQLLVYLDALINNSENIVENQAMPGAILYFRIDDPILKSKGDLTEEEIKSEILKELKLEGLLLDDVKVVKAMDNTLEPGTHSLIIPANMKKAGDLGKNKALITMEQFELLRKYVNEKMVEICQNMIEGKIDIEPCKENKNIVCDYCNYSHICQFDSSLEDNRYKVIPKKKDEDIWKSINEKVGGEVNGD.

8-15 (GRAGTGKS) provides a ligand contact to ATP. [4Fe-4S] cluster-binding residues include C791, C1112, C1115, and C1121.

This sequence belongs to the helicase family. AddB/RexB type 1 subfamily. In terms of assembly, heterodimer of AddA and AddB. Requires Mg(2+) as cofactor. It depends on [4Fe-4S] cluster as a cofactor.

The heterodimer acts as both an ATP-dependent DNA helicase and an ATP-dependent, dual-direction single-stranded exonuclease. Recognizes the chi site generating a DNA molecule suitable for the initiation of homologous recombination. The AddB subunit has 5' -&gt; 3' nuclease activity but not helicase activity. This chain is ATP-dependent helicase/deoxyribonuclease subunit B, found in Clostridium perfringens (strain SM101 / Type A).